We begin with the raw amino-acid sequence, 137 residues long: MLKANRLSIYAIGKIKKKWIREGINQYKKRMPDLIINESKSFNIDNIRVNNIIICLTEEGKSFSSTELTSLLLNFKNKKINFLIGDADGIPSDIKDKSHLLLSLSPLTFPHELARLILVEQIYRVISISNGSPYHRA.

S-adenosyl-L-methionine is bound by residues Leu56, Gly85, and 104–109 (LSPLTF).

It belongs to the RNA methyltransferase RlmH family. Homodimer.

Its subcellular location is the cytoplasm. It catalyses the reaction pseudouridine(1915) in 23S rRNA + S-adenosyl-L-methionine = N(3)-methylpseudouridine(1915) in 23S rRNA + S-adenosyl-L-homocysteine + H(+). Its function is as follows. Specifically methylates the pseudouridine at position 1915 (m3Psi1915) in 23S rRNA. The chain is Ribosomal RNA large subunit methyltransferase H from Prochlorococcus marinus (strain MIT 9515).